Consider the following 363-residue polypeptide: Phosphoserine aminotransferase (363 aa).

Arg42 contributes to the L-glutamate binding site. Pyridoxal 5'-phosphate contacts are provided by Trp105, Thr155, Asp175, and Gln198. Lys199 is subject to N6-(pyridoxal phosphate)lysine. 240–241 (NT) contributes to the pyridoxal 5'-phosphate binding site.

The protein belongs to the class-V pyridoxal-phosphate-dependent aminotransferase family. SerC subfamily. Homodimer. It depends on pyridoxal 5'-phosphate as a cofactor.

It is found in the cytoplasm. The enzyme catalyses O-phospho-L-serine + 2-oxoglutarate = 3-phosphooxypyruvate + L-glutamate. It catalyses the reaction 4-(phosphooxy)-L-threonine + 2-oxoglutarate = (R)-3-hydroxy-2-oxo-4-phosphooxybutanoate + L-glutamate. Its pathway is amino-acid biosynthesis; L-serine biosynthesis; L-serine from 3-phospho-D-glycerate: step 2/3. It functions in the pathway cofactor biosynthesis; pyridoxine 5'-phosphate biosynthesis; pyridoxine 5'-phosphate from D-erythrose 4-phosphate: step 3/5. Catalyzes the reversible conversion of 3-phosphohydroxypyruvate to phosphoserine and of 3-hydroxy-2-oxo-4-phosphonooxybutanoate to phosphohydroxythreonine. The polypeptide is Phosphoserine aminotransferase (Herminiimonas arsenicoxydans).